A 516-amino-acid polypeptide reads, in one-letter code: Zinc finger protein 83 (516 aa).

Residues 1 to 20 (MHGRKDDAQKQPVKNQLGLN) are disordered. The C2H2-type 1; degenerate zinc-finger motif lies at 93-115 (YKCSERGKAFHQGLHFTIHQIIH). 14 consecutive C2H2-type zinc fingers follow at residues 121 to 143 (FKCDICGKIFNKKSNLASHQRIH), 149 to 171 (YKCNECGKVFHNMSHLAQHRRIH), 177 to 199 (YKCNECGKVFNQISHLAQHQRIH), 205 to 227 (YKCNECGKVFHQISHLAQHRTIH), 233 to 255 (YECNKCGKVFSRNSYLVQHLIIH), 261 to 283 (YRCNVCGKVFHHISHLAQHQRIH), 289 to 311 (YKCNECGKVFSHKSSLVNHWRIH), 317 to 339 (YKCNECGKVFSHKSSLVNHWRIH), 345 to 367 (YKCNECGKVFSRNSYLAQHLIIH), 373 to 395 (YKCDECDKAFSQNSHLVQHHRIH), 401 to 423 (YKCDECGKVFSQNSYLAYHWRIH), 429 to 451 (YKCNECGKVFGLNSSLAHHRKIH), 457 to 479 (FKCNECGKAFSMRSSLTNHHAIH), and 485 to 507 (FKCNECGKLFRDNSYLVRHQRFH).

It belongs to the krueppel C2H2-type zinc-finger protein family.

Its subcellular location is the nucleus. In terms of biological role, may be involved in transcriptional regulation. This chain is Zinc finger protein 83 (ZNF83), found in Homo sapiens (Human).